Here is an 83-residue protein sequence, read N- to C-terminus: Cell division protein ZapB (83 aa).

Residues 7–80 (EMLEKLEAKV…RVRTLLGKMD (74 aa)) are a coiled coil.

It belongs to the ZapB family. Homodimer. The ends of the coiled-coil dimer bind to each other, forming polymers. Interacts with FtsZ.

It localises to the cytoplasm. Functionally, non-essential, abundant cell division factor that is required for proper Z-ring formation. It is recruited early to the divisome by direct interaction with FtsZ, stimulating Z-ring assembly and thereby promoting cell division earlier in the cell cycle. Its recruitment to the Z-ring requires functional FtsA or ZipA. The protein is Cell division protein ZapB of Photobacterium profundum (strain SS9).